A 448-amino-acid chain; its full sequence is Multiple inositol polyphosphate phosphatase 1 (448 aa).

The signal sequence occupies residues 1 to 19; sequence MAPRRAACLLPLLVAVASA. H69 is an active-site residue. N-linked (GlcNAc...) asparagine glycans are attached at residues N203, N257, N409, and N441. The Prevents secretion from ER motif lies at 445 to 448; that stretch reads ADEL.

This sequence belongs to the histidine acid phosphatase family. MINPP1 subfamily. In terms of processing, N-glycosylated. In terms of tissue distribution, present in growth plate chondrocytes but not detectable in articular chondrocytes (at protein level). Spatially restricted to chondrocytes in the lower portion of the proliferative zone and the upper portion of the hypertrophic zone in the growth plate of long bones (at protein level). Weakly expressed in kidney, liver, lung, skin and spleen, and not detected in brain, heart and muscle.

It localises to the endoplasmic reticulum lumen. The protein localises to the secreted. It is found in the cell membrane. The enzyme catalyses 1D-myo-inositol hexakisphosphate + H2O = 1D-myo-inositol 1,2,4,5,6-pentakisphosphate + phosphate. The catalysed reaction is 1D-myo-inositol 1,2,4,5,6-pentakisphosphate + H2O = 1D-myo-inositol 1,2,5,6-tetrakisphosphate + phosphate. It carries out the reaction 1D-myo-inositol 1,2,5,6-tetrakisphosphate + H2O = 1D-myo-inositol 1,2,6-trisphosphate + phosphate. It catalyses the reaction 1D-myo-inositol 1,2,6-trisphosphate + H2O = 1D-myo-inositol 1,2-bisphosphate + phosphate. The enzyme catalyses 1D-myo-inositol 1,2-bisphosphate + H2O = 1D-myo-inositol 2-phosphate + phosphate. The catalysed reaction is 1D-myo-inositol hexakisphosphate + H2O = 1D-myo-inositol 1,2,3,5,6-pentakisphosphate + phosphate. It carries out the reaction 1D-myo-inositol 1,2,3,5,6-pentakisphosphate + H2O = 1D-myo-inositol 1,2,3,6-tetrakisphosphate + phosphate. It catalyses the reaction 1D-myo-inositol 1,2,3,6-tetrakisphosphate + H2O = 1D-myo-inositol 1,2,3-trisphosphate + phosphate. The enzyme catalyses 1D-myo-inositol 1,2,3-trisphosphate + H2O = 1D-myo-inositol 2,3-bisphosphate + phosphate. The catalysed reaction is 1D-myo-inositol 2,3-bisphosphate + H2O = 1D-myo-inositol 2-phosphate + phosphate. It carries out the reaction 1D-myo-inositol 1,3,4,5,6-pentakisphosphate + H2O = 1D-myo-inositol 1,4,5,6-tetrakisphosphate + phosphate. It catalyses the reaction 1D-myo-inositol 1,4,5,6-tetrakisphosphate + H2O = 1D-myo-inositol 1,4,5-trisphosphate + phosphate. The enzyme catalyses (2R)-2,3-bisphosphoglycerate + H2O = (2R)-2-phosphoglycerate + phosphate. Its function is as follows. Multiple inositol polyphosphate phosphatase that hydrolyzes 1D-myo-inositol 1,3,4,5,6-pentakisphosphate (InsP5[2OH]) and 1D-myo-inositol hexakisphosphate (InsP6) to a range of less phosphorylated inositol phosphates. This regulates the availability of these various small molecule second messengers and metal chelators which control many aspects of cell physiology. Has a weak in vitro activity towards 1D-myo-inositol 1,4,5-trisphosphate which is unlikely to be physiologically relevant. By regulating intracellular inositol polyphosphates pools, which act as metal chelators, it may control the availability of intracellular calcium and iron, which are important for proper neuronal development and homeostasis. May have a dual substrate specificity, and function as a 2,3-bisphosphoglycerate 3-phosphatase hydrolyzing 2,3-bisphosphoglycerate to 2-phosphoglycerate. 2,3-bisphosphoglycerate (BPG) is formed as part of the Rapoport-Luebering glycolytic bypass and is a regulator of systemic oxygen homeostasis as the major allosteric effector of hemoglobin. The polypeptide is Multiple inositol polyphosphate phosphatase 1 (MINPP1) (Gallus gallus (Chicken)).